Here is a 2220-residue protein sequence, read N- to C-terminus: Non-reducing polyketide synthase stbA (2220 aa).

The segment at 10–255 is N-terminal acylcarrier protein transacylase domain (SAT); that stretch reads IFSPQNSPPK…HDATNTDMAQ (246 aa). The 425-residue stretch at 379-803 folds into the Ketosynthase family 3 (KS3) domain; it reads SDAIAVVGAG…GSNSALICSE (425 aa). Residues cysteine 551, histidine 687, and histidine 726 each act as for beta-ketoacyl synthase activity in the active site. A malonyl-CoA:ACP transacylase (MAT) domain region spans residues 906 to 1207; sequence LAFSGQSRTN…ADATQHTFQA (302 aa). Residue serine 993 is the For acyl/malonyl transferase activity of the active site. An N-terminal hotdog fold region spans residues 1287–1414; the sequence is EPRAAQLVRY…GDFTMTAGPH (128 aa). One can recognise a PKS/mFAS DH domain in the interval 1287–1589; sequence EPRAAQLVRY…FHKTSMTKLL (303 aa). The interval 1292 to 1588 is product template (PT) domain; sequence QLVRYKGALG…HFHKTSMTKL (297 aa). Histidine 1323 serves as the catalytic Proton acceptor; for dehydratase activity. The tract at residues 1436-1589 is C-terminal hotdog fold; that stretch reads DAEKLRKRTA…FHKTSMTKLL (154 aa). Aspartate 1500 (proton donor; for dehydratase activity) is an active-site residue. Carrier domains follow at residues 1634–1711 and 1742–1821; these read AAGP…SGGA and PAGP…AADV. An O-(pantetheine 4'-phosphoryl)serine mark is found at serine 1671 and serine 1779. The tract at residues 1879–2210 is thioesterase (TE) domain; that stretch reads TRFRMETVVY…YDFIFTELEN (332 aa). Catalysis depends on for thioesterase activity residues serine 1999 and aspartate 2148.

It catalyses the reaction 3 malonyl-CoA + acetyl-CoA + 2 H(+) = orsellinate + 3 CO2 + 4 CoA. The protein operates within secondary metabolite biosynthesis; terpenoid biosynthesis. Functionally, non-reducing polyketide synthase; part of the cluster that mediates the biosynthesis of LL-Z1272-beta, also known as ilicicolin B, a prenylated aryl-aldehyde produced by several fungi and that serves as a key pathway intermediate for many fungal meroterpenoids. The first step in the pathway is performed by the non-reducing polyketide synthase stbA that produces orsellinic acid by condensing acetyl-CoA with 3 malonyl-CoA units. The prenyltransferase stbC then prenylates orsenilic acid into grifolic acid. Finally, grifolic acid is reduced to ilicicolin B by the NRPS-like protein stbB. The protein is Non-reducing polyketide synthase stbA of Stachybotrys bisbyi (Hyalostachybotrys bisbyi).